The chain runs to 360 residues: Histidinol-phosphate aminotransferase (360 aa).

At Lys218 the chain carries N6-(pyridoxal phosphate)lysine.

This sequence belongs to the class-II pyridoxal-phosphate-dependent aminotransferase family. Histidinol-phosphate aminotransferase subfamily. Homodimer. Pyridoxal 5'-phosphate is required as a cofactor.

The enzyme catalyses L-histidinol phosphate + 2-oxoglutarate = 3-(imidazol-4-yl)-2-oxopropyl phosphate + L-glutamate. The protein operates within amino-acid biosynthesis; L-histidine biosynthesis; L-histidine from 5-phospho-alpha-D-ribose 1-diphosphate: step 7/9. The protein is Histidinol-phosphate aminotransferase of Pelagibacter ubique (strain HTCC1062).